The chain runs to 430 residues: Hydrogenobyrinate a,c-diamide synthase (430 aa).

The region spanning 239 to 422 (RIGVARDAAF…IHFYLPSDPL (184 aa)) is the GATase cobBQ-type domain. The active-site Nucleophile is the Cys321.

It belongs to the CobB/CbiA family. It depends on Mg(2+) as a cofactor.

It carries out the reaction hydrogenobyrinate + 2 L-glutamine + 2 ATP + 2 H2O = hydrogenobyrinate a,c-diamide + 2 L-glutamate + 2 ADP + 2 phosphate + 2 H(+). It participates in cofactor biosynthesis; adenosylcobalamin biosynthesis; cob(II)yrinate a,c-diamide from precorrin-2 (aerobic route): step 9/10. Functionally, catalyzes the ATP-dependent amidation of the two carboxylate groups at positions a and c of hydrogenobyrinate, using either L-glutamine or ammonia as the nitrogen source. The polypeptide is Hydrogenobyrinate a,c-diamide synthase (Stutzerimonas stutzeri (strain A1501) (Pseudomonas stutzeri)).